The sequence spans 430 residues: Tol-Pal system protein TolB (430 aa).

The first 21 residues, 1–21, serve as a signal peptide directing secretion; the sequence is MKQALRVAFGFLMLWAAVLHA.

The protein belongs to the TolB family. In terms of assembly, the Tol-Pal system is composed of five core proteins: the inner membrane proteins TolA, TolQ and TolR, the periplasmic protein TolB and the outer membrane protein Pal. They form a network linking the inner and outer membranes and the peptidoglycan layer.

Its subcellular location is the periplasm. Part of the Tol-Pal system, which plays a role in outer membrane invagination during cell division and is important for maintaining outer membrane integrity. TolB occupies a key intermediary position in the Tol-Pal system because it communicates directly with both membrane-embedded components, Pal in the outer membrane and TolA in the inner membrane. This chain is Tol-Pal system protein TolB, found in Salmonella typhi.